Here is a 364-residue protein sequence, read N- to C-terminus: Zinc finger protein CONSTANS-LIKE 12 (364 aa).

Residues cysteine 5, cysteine 8, cysteine 28, and histidine 33 each contribute to the Zn(2+) site. The B box-type 1; atypical zinc-finger motif lies at 5–47 (CDHCATSQALIYCKSDLAKLCLNCDVHVHSANPLSHRHIRSLI). Residues 48 to 88 (CEKCFSQPAAIRCLDEKVSYCQGCHWHESNCSELGHRVQSL) form a B box-type 2; degenerate zinc finger. Residues 280–322 (QDCGMSPGFIMSEAPWETNFEVSCPQARNEAKLRYKEKKLKRS) form the CCT domain.

This sequence belongs to the CONSTANS family.

Its subcellular location is the nucleus. This chain is Zinc finger protein CONSTANS-LIKE 12 (COL12), found in Arabidopsis thaliana (Mouse-ear cress).